Reading from the N-terminus, the 239-residue chain is Ribosomal RNA small subunit methyltransferase G (239 aa).

Residues Gly-78, Phe-83, 129–130, and Arg-148 contribute to the S-adenosyl-L-methionine site; that span reads AE.

Belongs to the methyltransferase superfamily. RNA methyltransferase RsmG family.

The protein localises to the cytoplasm. Functionally, specifically methylates the N7 position of a guanine in 16S rRNA. This is Ribosomal RNA small subunit methyltransferase G from Clostridium botulinum (strain Kyoto / Type A2).